Here is a 196-residue protein sequence, read N- to C-terminus: MSEVNEETLRAREALAGHYKEVLGLLGEDVEREGLLKTPERVAKAMQFLTKGYHEDPEAVLRSAMFQEEDYKQMVIVKDIDFFSLCEHHMLPFFGKAHVAYIPKKYITGLSKIPRVVDIFARRLQIQERMTMQIKDCIQRTLDPLGVMVVIEAQHMCMQMRGVEKQNSLTTTSDFTGFFQQAKTREEFMNLIKHNR.

Zn(2+) is bound by residues cysteine 86, histidine 89, and cysteine 157.

Belongs to the GTP cyclohydrolase I family. As to quaternary structure, toroid-shaped homodecamer, composed of two pentamers of five dimers.

It carries out the reaction GTP + H2O = 7,8-dihydroneopterin 3'-triphosphate + formate + H(+). It functions in the pathway cofactor biosynthesis; 7,8-dihydroneopterin triphosphate biosynthesis; 7,8-dihydroneopterin triphosphate from GTP: step 1/1. The sequence is that of GTP cyclohydrolase 1 from Parabacteroides distasonis (strain ATCC 8503 / DSM 20701 / CIP 104284 / JCM 5825 / NCTC 11152).